We begin with the raw amino-acid sequence, 692 residues long: Elongation factor G 2 (692 aa).

The tr-type G domain occupies 8–283; that stretch reads EKTRNIGIMA…AVIDYMPSPV (276 aa). GTP is bound by residues 17 to 24, 81 to 85, and 135 to 138; these read AHIDAGKT, DTPGH, and NKMD.

The protein belongs to the TRAFAC class translation factor GTPase superfamily. Classic translation factor GTPase family. EF-G/EF-2 subfamily.

It localises to the cytoplasm. Its function is as follows. Catalyzes the GTP-dependent ribosomal translocation step during translation elongation. During this step, the ribosome changes from the pre-translocational (PRE) to the post-translocational (POST) state as the newly formed A-site-bound peptidyl-tRNA and P-site-bound deacylated tRNA move to the P and E sites, respectively. Catalyzes the coordinated movement of the two tRNA molecules, the mRNA and conformational changes in the ribosome. This chain is Elongation factor G 2, found in Syntrophotalea carbinolica (strain DSM 2380 / NBRC 103641 / GraBd1) (Pelobacter carbinolicus).